The sequence spans 509 residues: GRAS family protein RAD1 (509 aa).

Positions 125-508 constitute a GRAS domain; it reads EDGCADGMRL…KPIVAASCWK (384 aa). The interval 132 to 198 is leucine repeat I (LRI); it reads MRLVQLLIAC…IQPIGSGAGV (67 aa). The tract at residues 217-286 is VHIID; the sequence is YRLVYETCPH…SGHGRVRRLR (70 aa). The VHIID motif lies at 248-252; it reads VHVVD. The segment at 299-331 is leucine repeat II (LRII); the sequence is AIGDELSDYANNLGINLEFSVVQKNLENLQPED. The interval 340-431 is PFYRE; sequence LVVNSILQLH…QFYFAEEIKN (92 aa). The interval 434-508 is SAW; sequence SCEGPLRMER…KPIVAASCWK (75 aa).

It belongs to the GRAS family. Interacts with RAM1 and NSP2. As to expression, expressed in roots under low phosphate (Pi) conditions.

It localises to the nucleus. In terms of biological role, transcription factor acting as a regulator of arbuscular mycorrhiza (AM)-related genes (e.g. PT4, STR and RAM2). Required for the morphogenesis of arbuscules upon symbiosis with AM fungi (e.g. Rhizophagus irregularis). Also involved in restricting mycorrhizal colonization of the root meristem. The protein is GRAS family protein RAD1 of Lotus japonicus (Lotus corniculatus var. japonicus).